We begin with the raw amino-acid sequence, 130 residues long: Follitropin subunit beta (130 aa).

The N-terminal stretch at 1–20 (MMKLIQLCILFWCWRAICCH) is a signal peptide. 6 disulfides stabilise this stretch: Cys22/Cys70, Cys36/Cys85, Cys39/Cys123, Cys47/Cys101, Cys51/Cys103, and Cys106/Cys113. Asn26 and Asn43 each carry an N-linked (GlcNAc...) asparagine glycan.

Belongs to the glycoprotein hormones subunit beta family. As to quaternary structure, heterodimer. The active follitropin is a heterodimer composed of an alpha chain/CGA shared with other hormones and a unique beta chain/FSHB shown here.

It is found in the secreted. In terms of biological role, together with the alpha chain CGA constitutes follitropin, the follicle-stimulating hormone, and provides its biological specificity to the hormone heterodimer. Binds FSHR, a G protein-coupled receptor, on target cells to activate downstream signaling pathways. Follitropin is involved in follicle development and spermatogenesis in reproductive organs. This chain is Follitropin subunit beta (Fshb), found in Mus musculus (Mouse).